A 394-amino-acid chain; its full sequence is S-adenosylmethionine synthase 2 (394 aa).

Glutamate 11 serves as a coordination point for Mg(2+). Histidine 17 lines the ATP pocket. Glutamate 45 lines the K(+) pocket. Glutamate 58 and glutamine 101 together coordinate L-methionine. Residues 169–171 (DGK), 237–240 (SGRF), aspartate 248, 254–255 (RK), alanine 271, lysine 275, and lysine 279 contribute to the ATP site. An L-methionine-binding site is contributed by aspartate 248. Lysine 279 serves as a coordination point for L-methionine.

The protein belongs to the AdoMet synthase family. In terms of assembly, homotetramer. It depends on Mn(2+) as a cofactor. Mg(2+) is required as a cofactor. Co(2+) serves as cofactor. Requires K(+) as cofactor.

Its subcellular location is the cytoplasm. The catalysed reaction is L-methionine + ATP + H2O = S-adenosyl-L-methionine + phosphate + diphosphate. It functions in the pathway amino-acid biosynthesis; S-adenosyl-L-methionine biosynthesis; S-adenosyl-L-methionine from L-methionine: step 1/1. Functionally, catalyzes the formation of S-adenosylmethionine from methionine and ATP. The reaction comprises two steps that are both catalyzed by the same enzyme: formation of S-adenosylmethionine (AdoMet) and triphosphate, and subsequent hydrolysis of the triphosphate. This chain is S-adenosylmethionine synthase 2 (SAM2), found in Hordeum vulgare (Barley).